We begin with the raw amino-acid sequence, 509 residues long: L-arabinose isomerase (509 aa).

Mn(2+)-binding residues include Glu313, Glu340, His357, and His456.

Belongs to the arabinose isomerase family. Mn(2+) serves as cofactor.

It catalyses the reaction beta-L-arabinopyranose = L-ribulose. The protein operates within carbohydrate degradation; L-arabinose degradation via L-ribulose; D-xylulose 5-phosphate from L-arabinose (bacterial route): step 1/3. Its function is as follows. Catalyzes the conversion of L-arabinose to L-ribulose. This chain is L-arabinose isomerase, found in Phocaeicola vulgatus (strain ATCC 8482 / DSM 1447 / JCM 5826 / CCUG 4940 / NBRC 14291 / NCTC 11154) (Bacteroides vulgatus).